Reading from the N-terminus, the 339-residue chain is MAETSTIGSGVALVGCGSATPSQRISNDQLGQRVDTSDAWIRSRTGISARRVIGPDETLTGLSHQAAANALTMAGWEPESVDLIILATSTPDDLFGSAPQLQAILGARQAVAFDLTAACSGFLFALITAAQFLRTGAMRRALVIGADQLSRWVDWDDRRSCVLFGDGAGAVALEATSAAQNGLLGFQLKSDGSRGDCLNLPQVQNHLSLVAGNSHQQGGFKPIQMNGQEVYKFAVREVPAILQTLLKATNTAPESLDWLLLHQANQRILDAVANRFAIPQAKVLSNLAEYGNTSAATIPLMLDEAVQDGRIKPGQLIASSGFGAGLSWGAALIRWHGPI.

Active-site residues include Cys119 and His262. The ACP-binding stretch occupies residues 263–267 (QANQR). Residue Asn292 is part of the active site.

This sequence belongs to the thiolase-like superfamily. FabH family. Homodimer.

The protein localises to the cytoplasm. It carries out the reaction malonyl-[ACP] + acetyl-CoA + H(+) = 3-oxobutanoyl-[ACP] + CO2 + CoA. It participates in lipid metabolism; fatty acid biosynthesis. In terms of biological role, catalyzes the condensation reaction of fatty acid synthesis by the addition to an acyl acceptor of two carbons from malonyl-ACP. Catalyzes the first condensation reaction which initiates fatty acid synthesis and may therefore play a role in governing the total rate of fatty acid production. Possesses both acetoacetyl-ACP synthase and acetyl transacylase activities. Its substrate specificity determines the biosynthesis of branched-chain and/or straight-chain of fatty acids. The chain is Beta-ketoacyl-[acyl-carrier-protein] synthase III from Prochlorococcus marinus (strain MIT 9313).